We begin with the raw amino-acid sequence, 384 residues long: S-adenosylmethionine synthase (384 aa).

Histidine 15 is an ATP binding site. Position 17 (aspartate 17) interacts with Mg(2+). A K(+)-binding site is contributed by glutamate 43. L-methionine contacts are provided by glutamate 56 and glutamine 99. The flexible loop stretch occupies residues 99–109 (QSPDINQGVDK). Residues 164–166 (DAK), 230–231 (RF), aspartate 239, 245–246 (RK), alanine 262, and lysine 266 contribute to the ATP site. Aspartate 239 is a binding site for L-methionine. Residue lysine 270 participates in L-methionine binding.

This sequence belongs to the AdoMet synthase family. In terms of assembly, homotetramer; dimer of dimers. It depends on Mg(2+) as a cofactor. The cofactor is K(+).

Its subcellular location is the cytoplasm. The catalysed reaction is L-methionine + ATP + H2O = S-adenosyl-L-methionine + phosphate + diphosphate. Its pathway is amino-acid biosynthesis; S-adenosyl-L-methionine biosynthesis; S-adenosyl-L-methionine from L-methionine: step 1/1. Its function is as follows. Catalyzes the formation of S-adenosylmethionine (AdoMet) from methionine and ATP. The overall synthetic reaction is composed of two sequential steps, AdoMet formation and the subsequent tripolyphosphate hydrolysis which occurs prior to release of AdoMet from the enzyme. The sequence is that of S-adenosylmethionine synthase from Aliivibrio fischeri (strain ATCC 700601 / ES114) (Vibrio fischeri).